The primary structure comprises 237 residues: Uridylate kinase (237 aa).

9–12 (KLSG) contributes to the ATP binding site. Position 51 (G51) interacts with UMP. ATP contacts are provided by G52 and R56. Residues D71 and 132–139 (CGNPFFTT) contribute to the UMP site. 3 residues coordinate ATP: T159, Y165, and D168.

It belongs to the UMP kinase family. As to quaternary structure, homohexamer.

The protein localises to the cytoplasm. It carries out the reaction UMP + ATP = UDP + ADP. It functions in the pathway pyrimidine metabolism; CTP biosynthesis via de novo pathway; UDP from UMP (UMPK route): step 1/1. With respect to regulation, inhibited by UTP. Functionally, catalyzes the reversible phosphorylation of UMP to UDP. In Prochlorococcus marinus (strain SARG / CCMP1375 / SS120), this protein is Uridylate kinase.